The primary structure comprises 98 residues: DNA-binding protein Fis (98 aa).

A DNA-binding region (H-T-H motif) is located at residues 74–93 (QTKAANMMGINRGTLRKKLK).

This sequence belongs to the transcriptional regulatory Fis family. Homodimer.

Functionally, activates ribosomal RNA transcription. Plays a direct role in upstream activation of rRNA promoters. In Aliivibrio fischeri (strain ATCC 700601 / ES114) (Vibrio fischeri), this protein is DNA-binding protein Fis.